Consider the following 558-residue polypeptide: 2-isopropylmalate synthase (558 aa).

The region spanning 30–303 is the Pyruvate carboxyltransferase domain; it reads PIWCSVDLRD…DPKLDCSDIE (274 aa). Residues Asp-39, His-242, His-244, and Asn-278 each coordinate Mg(2+). The regulatory domain stretch occupies residues 437–558; sequence QPGARIKFVD…ANRVLDVVGK (122 aa).

The protein belongs to the alpha-IPM synthase/homocitrate synthase family. LeuA type 2 subfamily. As to quaternary structure, homodimer. Requires Mg(2+) as cofactor.

The protein resides in the cytoplasm. The catalysed reaction is 3-methyl-2-oxobutanoate + acetyl-CoA + H2O = (2S)-2-isopropylmalate + CoA + H(+). Its pathway is amino-acid biosynthesis; L-leucine biosynthesis; L-leucine from 3-methyl-2-oxobutanoate: step 1/4. Catalyzes the condensation of the acetyl group of acetyl-CoA with 3-methyl-2-oxobutanoate (2-ketoisovalerate) to form 3-carboxy-3-hydroxy-4-methylpentanoate (2-isopropylmalate). This Rhizobium meliloti (strain 1021) (Ensifer meliloti) protein is 2-isopropylmalate synthase.